Here is a 92-residue protein sequence, read N- to C-terminus: MTRSLKKNPFVANNLLKKINKLNTKEEKEIIITWSRASTIIPIMVGHTIAIHNGKEHLPIYITDRMVGHKLGEFAPTLNFRGHAKSDNRSRR.

Belongs to the universal ribosomal protein uS19 family.

It localises to the plastid. Its subcellular location is the chloroplast. Its function is as follows. Protein S19 forms a complex with S13 that binds strongly to the 16S ribosomal RNA. The protein is Small ribosomal subunit protein uS19c of Guizotia abyssinica (Niger).